We begin with the raw amino-acid sequence, 915 residues long: Translation initiation factor IF-2 (915 aa).

The segment covering 83 to 94 (QSRRAVEKEQIL) has biased composition (basic and acidic residues). 3 disordered regions span residues 83–177 (QSRR…PEPP), 216–280 (EADR…KPAV), and 293–328 (ISGM…LLRE). 2 stretches are compositionally biased toward low complexity: residues 111–129 (VRAA…EAPS) and 137–164 (APAT…LSAP). The span at 165–177 (LPEPVPEPVPEPP) shows a compositional bias: pro residues. The span at 293–305 (ISGMDDSSGTGSR) shows a compositional bias: polar residues. The segment covering 314 to 328 (MEREREQEEADLLRE) has biased composition (basic and acidic residues). The tr-type G domain occupies 412–582 (TRPPVVTIMG…LTEAEMRELK (171 aa)). The interval 421-428 (GHVDHGKT) is G1. 421 to 428 (GHVDHGKT) provides a ligand contact to GTP. Residues 446–450 (GITQH) form a G2 region. Residues 468 to 471 (DTPG) form a G3 region. GTP-binding positions include 468–472 (DTPGH) and 522–525 (NKMD). A G4 region spans residues 522-525 (NKMD). Residues 558 to 560 (SAK) form a G5 region.

It belongs to the TRAFAC class translation factor GTPase superfamily. Classic translation factor GTPase family. IF-2 subfamily.

The protein resides in the cytoplasm. In terms of biological role, one of the essential components for the initiation of protein synthesis. Protects formylmethionyl-tRNA from spontaneous hydrolysis and promotes its binding to the 30S ribosomal subunits. Also involved in the hydrolysis of GTP during the formation of the 70S ribosomal complex. This chain is Translation initiation factor IF-2, found in Chlorobium luteolum (strain DSM 273 / BCRC 81028 / 2530) (Pelodictyon luteolum).